Reading from the N-terminus, the 728-residue chain is Catalase-peroxidase 1 (728 aa).

Positions 1-16 (MDKAQHTQGKCPVAHG) are cleaved as a signal peptide. A cross-link (tryptophyl-tyrosyl-methioninium (Trp-Tyr) (with M-251)) is located at residues 97–225 (WHSAGTYRMA…LAAVMMGLIY (129 aa)). The active-site Proton acceptor is the H98. A cross-link (tryptophyl-tyrosyl-methioninium (Tyr-Met) (with W-97)) is located at residues 225–251 (YVNPEGVDGQPDPLKTAQDIRVTFERM). Heme b is bound at residue H266.

This sequence belongs to the peroxidase family. Peroxidase/catalase subfamily. In terms of assembly, homodimer or homotetramer. Heme b serves as cofactor. In terms of processing, formation of the three residue Trp-Tyr-Met cross-link is important for the catalase, but not the peroxidase activity of the enzyme.

It carries out the reaction H2O2 + AH2 = A + 2 H2O. The catalysed reaction is 2 H2O2 = O2 + 2 H2O. Bifunctional enzyme with both catalase and broad-spectrum peroxidase activity. The sequence is that of Catalase-peroxidase 1 from Shewanella frigidimarina (strain NCIMB 400).